Here is a 120-residue protein sequence, read N- to C-terminus: Crustacean hyperglycemic hormones 4 (120 aa).

An N-terminal signal peptide occupies residues 1 to 26 (MVALNTLSAVSAALLVLAASPSPASA). 3 cysteine pairs are disulfide-bonded: cysteine 53–cysteine 89, cysteine 69–cysteine 85, and cysteine 72–cysteine 98. Valine 118 carries the valine amide modification.

Belongs to the arthropod CHH/MIH/GIH/VIH hormone family.

Its subcellular location is the secreted. Functionally, hormone found in the sinus gland of isopods and decapods which controls the blood sugar level. Has a secretagogue action over the amylase released from the midgut gland. May act as a stress hormone and may be involved in the control of molting and reproduction. This is Crustacean hyperglycemic hormones 4 (CHH4) from Penaeus monodon (Giant tiger prawn).